We begin with the raw amino-acid sequence, 203 residues long: Thymidine kinase (203 aa).

ATP-binding positions include 9–16 (ATMNAGKT) and 87–90 (DEAQ). Catalysis depends on Glu-88, which acts as the Proton acceptor. Cys-145, Cys-147, Cys-181, and His-184 together coordinate Zn(2+).

This sequence belongs to the thymidine kinase family. In terms of assembly, homotetramer.

The protein localises to the cytoplasm. The catalysed reaction is thymidine + ATP = dTMP + ADP + H(+). The sequence is that of Thymidine kinase from Mesorhizobium japonicum (strain LMG 29417 / CECT 9101 / MAFF 303099) (Mesorhizobium loti (strain MAFF 303099)).